The sequence spans 472 residues: Siroheme synthase 1 (472 aa).

Residues 1-203 (MDYLPLFADL…GQLTEAENEL (203 aa)) form a precorrin-2 dehydrogenase /sirohydrochlorin ferrochelatase region. NAD(+)-binding positions include 22 to 23 (EV) and 43 to 44 (QT). The residue at position 128 (Ser-128) is a Phosphoserine. Positions 215 to 472 (GEVALVGAGP…AISPSVVNLA (258 aa)) are uroporphyrinogen-III C-methyltransferase. Position 224 (Pro-224) interacts with S-adenosyl-L-methionine. Catalysis depends on Asp-247, which acts as the Proton acceptor. Lys-269 (proton donor) is an active-site residue. S-adenosyl-L-methionine is bound by residues 300 to 302 (GGD), Ile-305, 330 to 331 (TA), Met-382, and Gly-411.

The protein in the N-terminal section; belongs to the precorrin-2 dehydrogenase / sirohydrochlorin ferrochelatase family. In the C-terminal section; belongs to the precorrin methyltransferase family.

It carries out the reaction uroporphyrinogen III + 2 S-adenosyl-L-methionine = precorrin-2 + 2 S-adenosyl-L-homocysteine + H(+). The enzyme catalyses precorrin-2 + NAD(+) = sirohydrochlorin + NADH + 2 H(+). It catalyses the reaction siroheme + 2 H(+) = sirohydrochlorin + Fe(2+). Its pathway is cofactor biosynthesis; adenosylcobalamin biosynthesis; precorrin-2 from uroporphyrinogen III: step 1/1. It functions in the pathway cofactor biosynthesis; adenosylcobalamin biosynthesis; sirohydrochlorin from precorrin-2: step 1/1. The protein operates within porphyrin-containing compound metabolism; siroheme biosynthesis; precorrin-2 from uroporphyrinogen III: step 1/1. It participates in porphyrin-containing compound metabolism; siroheme biosynthesis; siroheme from sirohydrochlorin: step 1/1. Its pathway is porphyrin-containing compound metabolism; siroheme biosynthesis; sirohydrochlorin from precorrin-2: step 1/1. Multifunctional enzyme that catalyzes the SAM-dependent methylations of uroporphyrinogen III at position C-2 and C-7 to form precorrin-2 via precorrin-1. Then it catalyzes the NAD-dependent ring dehydrogenation of precorrin-2 to yield sirohydrochlorin. Finally, it catalyzes the ferrochelation of sirohydrochlorin to yield siroheme. The protein is Siroheme synthase 1 of Yersinia pseudotuberculosis serotype I (strain IP32953).